The chain runs to 427 residues: Adenylosuccinate synthetase (427 aa).

GTP-binding positions include 12–18 and 40–42; these read GDEGKGK and GHT. The active-site Proton acceptor is Asp-13. Positions 13 and 40 each coordinate Mg(2+). IMP contacts are provided by residues 13–16, 38–41, Thr-128, Arg-142, Gln-223, Thr-238, and Arg-302; these read DEGK and NAGH. His-41 (proton donor) is an active-site residue. 298–304 serves as a coordination point for substrate; sequence TTTGRPR. GTP is bound by residues Arg-304, 330-332, and 412-414; these read KLD and GVG.

Belongs to the adenylosuccinate synthetase family. In terms of assembly, homodimer. Mg(2+) is required as a cofactor.

It localises to the cytoplasm. It catalyses the reaction IMP + L-aspartate + GTP = N(6)-(1,2-dicarboxyethyl)-AMP + GDP + phosphate + 2 H(+). The protein operates within purine metabolism; AMP biosynthesis via de novo pathway; AMP from IMP: step 1/2. Plays an important role in the de novo pathway of purine nucleotide biosynthesis. Catalyzes the first committed step in the biosynthesis of AMP from IMP. The sequence is that of Adenylosuccinate synthetase from Pelotomaculum thermopropionicum (strain DSM 13744 / JCM 10971 / SI).